A 305-amino-acid chain; its full sequence is Aquaporin-1 (305 aa).

A disordered region spans residues 1 to 34; that stretch reads MSSNDSNDTDKQHTRLDPTGVDDAYIPPEQPETK. Residues 1–48 lie on the Cytoplasmic side of the membrane; the sequence is MSSNDSNDTDKQHTRLDPTGVDDAYIPPEQPETKHHRFKISRDTLRDH. A helical membrane pass occupies residues 49 to 69; the sequence is FIAAVGEFCGTFMFLWCAYVI. Over 70 to 91 the chain is Extracellular; it reads CNVANHDVALVAAPDGSHPGQL. Residues 92–112 form a helical membrane-spanning segment; the sequence is IMIAIGFGFSVMFSIWCFAGV. At 113 to 136 the chain is on the cytoplasmic side; it reads SGGALNPAMSLSLCLARAVSPTRC. The NPA 1 motif lies at 118-120; it reads NPA. A helical membrane pass occupies residues 137 to 157; it reads VVMWVSQIVAGMAAGGAASAM. The Extracellular portion of the chain corresponds to 158 to 176; the sequence is TPGEVLFANSLGLGCSRTR. A helical membrane pass occupies residues 177 to 197; the sequence is GLFLEMFGTAILCLTVLMTAV. Topologically, residues 198–203 are cytoplasmic; the sequence is EKRETN. A helical membrane pass occupies residues 204–224; it reads FMAALPIGISLFIAHVALTAY. Over 225–248 the chain is Extracellular; that stretch reads TGTGVNPARSLGAAVAARYFPHYH. The NPA 2 motif lies at 230-232; that stretch reads NPA. A helical membrane pass occupies residues 249 to 269; the sequence is WIYWIGTLLGSILAWSVWQLL. Residues 270-305 lie on the Cytoplasmic side of the membrane; that stretch reads QILDYTTYVTAEKAASTKEKAQKKGETSSSSAVAEV. A compositionally biased stretch (basic and acidic residues) spans 286 to 295; sequence TKEKAQKKGE. Residues 286 to 305 are disordered; the sequence is TKEKAQKKGETSSSSAVAEV. Polar residues predominate over residues 296–305; sequence TSSSSAVAEV.

The protein belongs to the MIP/aquaporin (TC 1.A.8) family.

The protein localises to the endoplasmic reticulum membrane. Its subcellular location is the cell membrane. Its function is as follows. Water channel required to facilitate the transport of water across membranes. Involved in sporulation, freeze tolerance and osmotolerance. Is non-functional in most laboratory strains. The polypeptide is Aquaporin-1 (AQY1) (Saccharomyces cerevisiae (strain ATCC 204508 / S288c) (Baker's yeast)).